The chain runs to 183 residues: Ribosome-recycling factor (183 aa).

The protein belongs to the RRF family.

The protein localises to the cytoplasm. Its function is as follows. Responsible for the release of ribosomes from messenger RNA at the termination of protein biosynthesis. May increase the efficiency of translation by recycling ribosomes from one round of translation to another. The sequence is that of Ribosome-recycling factor from Treponema pallidum (strain Nichols).